The chain runs to 312 residues: MEIKNCSVVTEFILLGIPHTEGFETLLFVLFLPFYACTLVGNVSILVAVISSTRLHTPMYFFLGNLSVFDMGFSSVTCPKMLFYLMGLSRLISYQDCVSQLFFFHFLGSIECFLYTVMAYDRFAAICHPLRYSVIMNSKICVALAVGTWLLGCFHSSVLTSLTFTLPYCGPNEVDHFFCDIPAILPLASADTSLAQRVSFTNVGLVSLVCFLLILLSYTRITISILSIQSTEGRQRAFSTCSAHLIAILCAYGPIITIYLQPTPNPMLGTVVQILMNLVGPMLNPLIYTLRNKEVKIALKKILHGKGSVSEG.

Over 1–26 (MEIKNCSVVTEFILLGIPHTEGFETL) the chain is Extracellular. N-linked (GlcNAc...) asparagine glycosylation is present at Asn-5. The helical transmembrane segment at 27 to 47 (LFVLFLPFYACTLVGNVSILV) threads the bilayer. The Cytoplasmic portion of the chain corresponds to 48 to 57 (AVISSTRLHT). The chain crosses the membrane as a helical span at residues 58-78 (PMYFFLGNLSVFDMGFSSVTC). Residues 79–97 (PKMLFYLMGLSRLISYQDC) are Extracellular-facing. A disulfide bridge links Cys-97 with Cys-179. A helical transmembrane segment spans residues 98–118 (VSQLFFFHFLGSIECFLYTVM). The Cytoplasmic portion of the chain corresponds to 119–139 (AYDRFAAICHPLRYSVIMNSK). The chain crosses the membrane as a helical span at residues 140-160 (ICVALAVGTWLLGCFHSSVLT). The Extracellular portion of the chain corresponds to 161–197 (SLTFTLPYCGPNEVDHFFCDIPAILPLASADTSLAQR). A helical transmembrane segment spans residues 198–218 (VSFTNVGLVSLVCFLLILLSY). Residues 219 to 239 (TRITISILSIQSTEGRQRAFS) are Cytoplasmic-facing. Residues 240-260 (TCSAHLIAILCAYGPIITIYL) form a helical membrane-spanning segment. Topologically, residues 261 to 266 (QPTPNP) are extracellular. Residues 267–287 (MLGTVVQILMNLVGPMLNPLI) traverse the membrane as a helical segment. The Cytoplasmic portion of the chain corresponds to 288–312 (YTLRNKEVKIALKKILHGKGSVSEG).

The protein belongs to the G-protein coupled receptor 1 family.

It is found in the cell membrane. Functionally, potential odorant receptor. The chain is Olfactory receptor 10D3 from Mus musculus (Mouse).